The sequence spans 556 residues: Urocanate hydratase (556 aa).

Residues 52-53, Gln130, 176-178, Glu196, Arg201, 242-243, 263-267, 273-274, and Tyr322 contribute to the NAD(+) site; these read GG, GMG, NA, QTSAH, and YL. Cys410 is an active-site residue. Residue Gly492 coordinates NAD(+).

Belongs to the urocanase family. NAD(+) serves as cofactor.

It is found in the cytoplasm. The enzyme catalyses 4-imidazolone-5-propanoate = trans-urocanate + H2O. The protein operates within amino-acid degradation; L-histidine degradation into L-glutamate; N-formimidoyl-L-glutamate from L-histidine: step 2/3. In terms of biological role, catalyzes the conversion of urocanate to 4-imidazolone-5-propionate. This chain is Urocanate hydratase, found in Acidiphilium cryptum (strain JF-5).